Consider the following 432-residue polypeptide: Proline--tRNA ligase (432 aa).

It belongs to the class-II aminoacyl-tRNA synthetase family. ProS type 2 subfamily. Homodimer.

Its subcellular location is the cytoplasm. It carries out the reaction tRNA(Pro) + L-proline + ATP = L-prolyl-tRNA(Pro) + AMP + diphosphate. In terms of biological role, catalyzes the attachment of proline to tRNA(Pro) in a two-step reaction: proline is first activated by ATP to form Pro-AMP and then transferred to the acceptor end of tRNA(Pro). This chain is Proline--tRNA ligase, found in Rickettsia bellii (strain OSU 85-389).